The primary structure comprises 251 residues: Enolase-phosphatase E1 (251 aa).

Residues Asp13 and Glu15 each coordinate Mg(2+). Substrate is bound by residues 137-138 (SS) and Lys183. Asp210 is a binding site for Mg(2+).

This sequence belongs to the HAD-like hydrolase superfamily. MasA/MtnC family. As to quaternary structure, monomer. Requires Mg(2+) as cofactor.

It is found in the cytoplasm. The protein resides in the nucleus. The enzyme catalyses 5-methylsulfanyl-2,3-dioxopentyl phosphate + H2O = 1,2-dihydroxy-5-(methylsulfanyl)pent-1-en-3-one + phosphate. Its pathway is amino-acid biosynthesis; L-methionine biosynthesis via salvage pathway; L-methionine from S-methyl-5-thio-alpha-D-ribose 1-phosphate: step 3/6. The protein operates within amino-acid biosynthesis; L-methionine biosynthesis via salvage pathway; L-methionine from S-methyl-5-thio-alpha-D-ribose 1-phosphate: step 4/6. Functionally, bifunctional enzyme that catalyzes the enolization of 2,3-diketo-5-methylthiopentyl-1-phosphate (DK-MTP-1-P) into the intermediate 2-hydroxy-3-keto-5-methylthiopentenyl-1-phosphate (HK-MTPenyl-1-P), which is then dephosphorylated to form the acireductone 1,2-dihydroxy-3-keto-5-methylthiopentene (DHK-MTPene). This is Enolase-phosphatase E1 from Candida glabrata (strain ATCC 2001 / BCRC 20586 / JCM 3761 / NBRC 0622 / NRRL Y-65 / CBS 138) (Yeast).